The chain runs to 22 residues: Proline-rich peptide (22 aa).

Residues 1-22 (FVDRNRIPRSNNGPKIPIISNP) are disordered.

The protein localises to the secreted. In terms of biological role, antibacterial peptide active against Gram-positive bacterium M.luteus and Gram-negative bacterium E.coli. This chain is Proline-rich peptide, found in Calliphora vicina (Blue blowfly).